A 960-amino-acid chain; its full sequence is ATPase 4, plasma membrane-type (960 aa).

Residues 1–69 (MTTTVEDNRE…EKKESKFLKF (69 aa)) lie on the Cytoplasmic side of the membrane. Residues 70–89 (LGFMWNPLSWVMEAAAIMAI) traverse the membrane as a helical segment. Topologically, residues 90–101 (ALANGGGKPPDW) are extracellular. A helical transmembrane segment spans residues 102–122 (QDFVGIITLLVINSTISFIEE). Over 123–251 (NNAGNAAAAL…GHFQQVLTAI (129 aa)) the chain is Cytoplasmic. The chain crosses the membrane as a helical span at residues 252-272 (GNFCICSIAVGMLIEIVVMYP). At 273–281 (IQHRAYRPG) the chain is on the extracellular side. Residues 282–299 (IDNLLVLLIGGIPIAMPT) traverse the membrane as a helical segment. The Cytoplasmic segment spans residues 300-651 (VLSVTMAIGS…TSRAIFQRMK (352 aa)). Asp337 serves as the catalytic 4-aspartylphosphate intermediate. Asp596 and Asp600 together coordinate Mg(2+). Residues 652 to 673 (NYTIYAVSITIRIVLGFMLLAL) form a helical membrane-spanning segment. At 674–678 (IWQFD) the chain is on the extracellular side. Residues 679–701 (FPPFMVLIIAILNDGTIMTISKD) form a helical membrane-spanning segment. Over 702–717 (RVKPSPLPDSWKLSEI) the chain is Cytoplasmic. Residues 718 to 738 (FATGVVFGSYMAMMTVIFFWV) traverse the membrane as a helical segment. The Extracellular portion of the chain corresponds to 739-763 (SYKTDFFPRTFGVATLEKTAHDDFR). The chain crosses the membrane as a helical span at residues 764–784 (KLASAIYLQVSIISQALIFVT). The Cytoplasmic segment spans residues 785–796 (RSRSWSFVERPG). The helical transmembrane segment at 797–817 (IFLMIAFILAQLVATLIAVYA) threads the bilayer. The Extracellular segment spans residues 818–825 (NWSFAAIE). Residues 826–846 (GIGWGWAGVIWLYNIIFYIPL) traverse the membrane as a helical segment. At 847 to 960 (DFIKFFIRYA…IETIQQAYTV (114 aa)) the chain is on the cytoplasmic side. A Phosphothreonine modification is found at Thr893. Ser942 carries the post-translational modification Phosphoserine. The interval 958-960 (YTV) is interaction with 14-3-3 proteins. A Phosphothreonine modification is found at Thr959.

Belongs to the cation transport ATPase (P-type) (TC 3.A.3) family. Type IIIA subfamily. Binds to 14-3-3 proteins. The binding is induced by phosphorylation of Thr-959. Binding to 14-3-3 proteins activates the H(+)-ATPase. In terms of tissue distribution, expressed in guard cells and roots.

It is found in the cell membrane. The enzyme catalyses ATP + H2O + H(+)(in) = ADP + phosphate + 2 H(+)(out). Functionally, the plasma membrane H(+) ATPase of plants and fungi generates a proton gradient that drives the active transport of nutrients by H(+)-symport. The resulting external acidification and/or internal alkinization may mediate growth responses. This chain is ATPase 4, plasma membrane-type (AHA4), found in Arabidopsis thaliana (Mouse-ear cress).